A 258-amino-acid chain; its full sequence is MFKVRVIPCLDVKDGRVVKGVNFVDLRDAGDPVEAAVAYDAAGADELTFLDITATHENRGIMLDVVRRTAEACFMPVTVGGGVRTIDDIRTLLRSGADKVSINSAAVSRREFVKEAAEKFGDQCIVVAIDAKRVSRAGGSDRWEIFTHGGRKSTGIDAIDYAQEVVSLGAGEILLTSMDRDGTRQGFDLPLTRLVADSVSVPVIASGGVGNLDHLVDGIREGHATAVLAASIFHFGEFTIRQAKDHMARAGLPMRLDP.

Catalysis depends on residues Asp11 and Asp130.

It belongs to the HisA/HisF family. In terms of assembly, heterodimer of HisH and HisF.

It is found in the cytoplasm. It carries out the reaction 5-[(5-phospho-1-deoxy-D-ribulos-1-ylimino)methylamino]-1-(5-phospho-beta-D-ribosyl)imidazole-4-carboxamide + L-glutamine = D-erythro-1-(imidazol-4-yl)glycerol 3-phosphate + 5-amino-1-(5-phospho-beta-D-ribosyl)imidazole-4-carboxamide + L-glutamate + H(+). Its pathway is amino-acid biosynthesis; L-histidine biosynthesis; L-histidine from 5-phospho-alpha-D-ribose 1-diphosphate: step 5/9. Its function is as follows. IGPS catalyzes the conversion of PRFAR and glutamine to IGP, AICAR and glutamate. The HisF subunit catalyzes the cyclization activity that produces IGP and AICAR from PRFAR using the ammonia provided by the HisH subunit. The protein is Imidazole glycerol phosphate synthase subunit HisF of Nitrobacter hamburgensis (strain DSM 10229 / NCIMB 13809 / X14).